The chain runs to 516 residues: Membrane-bound transcription factor site-2 protease (516 aa).

Residues 1–3 (MIP) lie on the Cytoplasmic side of the membrane. A helical membrane pass occupies residues 4–24 (VSLVVVVVGGWTAVYLTDLVL). Over 25-74 (KSSVYFKHSYEDWLENNGLSISPFHIRWQTAVFNRAFYSWGRRKARMLYQ) the chain is Lumenal. 2 consecutive transmembrane segments (helical) span residues 75 to 95 (WFNFGMVFGVIAMFSSFFLLG) and 96 to 107 (KTLIQTLGQMMA). The Lumenal portion of the chain corresponds to 108 to 141 (DSSYSSSSSSSSHSSSSSSSSSSSSSLYNEQVLQ). A helical transmembrane segment spans residues 142-166 (VVVPGINLPVNQLTYFFAAVLISGV). Residue His-168 coordinates Zn(2+). The active site involves Glu-169. Transmembrane regions (helical) follow at residues 171 to 183 (GHGIAAIREQVRF), 184 to 206 (NGFGIFLFIIYPGAFVDLFTTHL), and 226 to 248 (FILALLGILALILLPVILLPFYY). Residue His-172 participates in Zn(2+) binding. Residues 249–443 (TGVGVLITEV…LPVVVETFVK (195 aa)) are Lumenal-facing. Asn-334 carries an N-linked (GlcNAc...) asparagine glycan. The next 2 helical transmembrane spans lie at 444-461 (YLISLSGALAIVNAVPCF) and 462-473 (ALDGQWILNSFL). Topologically, residues 474 to 489 (DATLTSVIGDNDVKDL) are lumenal. Residues 490–510 (IGFFILLGGSILLAANVALGL) traverse the membrane as a helical segment. The Cytoplasmic segment spans residues 511 to 516 (WMVTAR).

This sequence belongs to the peptidase M50A family. Zn(2+) serves as cofactor.

The protein localises to the membrane. Its subcellular location is the cytoplasm. It is found in the golgi apparatus membrane. It catalyses the reaction Cleaves several transcription factors that are type-2 transmembrane proteins within membrane-spanning domains. Known substrates include sterol regulatory element-binding protein (SREBP) -1, SREBP-2 and forms of the transcriptional activator ATF6. SREBP-2 is cleaved at the site 477-DRSRILL-|-CVLTFLCLSFNPLTSLLQWGGA-505. The residues Asn-Pro, 11 residues distal to the site of cleavage in the membrane-spanning domain, are important for cleavage by S2P endopeptidase. Replacement of either of these residues does not prevent cleavage, but there is no cleavage if both of these residues are replaced.. Functionally, zinc metalloprotease that mediates intramembrane proteolysis of proteins such as ATF6, ATF6B, SREBF1/SREBP1 and SREBF2/SREBP2. Catalyzes the second step in the proteolytic activation of the sterol regulatory element-binding proteins (SREBPs) SREBF1/SREBP1 and SREBF2/SREBP2: cleaves SREBPs within the first transmembrane segment, thereby releasing the N-terminal segment with a portion of the transmembrane segment attached. Mature N-terminal SREBP fragments shuttle to the nucleus and activate gene transcription. Also mediates the second step in the proteolytic activation of the cyclic AMP-dependent transcription factor ATF-6 (ATF6 and ATF6B). Involved in intramembrane proteolysis during bone formation. In astrocytes and osteoblasts, upon DNA damage and ER stress, mediates the second step of the regulated intramembrane proteolytic activation of the transcription factor CREB3L1, leading to the inhibition of cell-cycle progression. This is Membrane-bound transcription factor site-2 protease from Bos taurus (Bovine).